Reading from the N-terminus, the 445-residue chain is Putrescine hydroxycinnamoyltransferase 1 (445 aa).

Active-site proton acceptor residues include His-154 and Asp-388.

It belongs to the plant acyltransferase family. In terms of tissue distribution, expressed in leaves.

Its function is as follows. Hydroxycinnamoyl transferase that catalyzes the transfer of an acyl from p-coumaryol-CoA to putrescine, to produce coumaroyl putrescine. This Oryza sativa subsp. japonica (Rice) protein is Putrescine hydroxycinnamoyltransferase 1.